Here is a 278-residue protein sequence, read N- to C-terminus: Probable F-box protein At1g14315 (278 aa).

The F-box domain occupies 1–43 (MQLLPHDTVEDILERVPVKSLLRFKSACKQWKLTIESQYFQAK).

The chain is Probable F-box protein At1g14315 from Arabidopsis thaliana (Mouse-ear cress).